The following is a 466-amino-acid chain: Ribulose bisphosphate carboxylase large chain (466 aa).

At Lys5 the chain carries N6,N6,N6-trimethyllysine. Asn114 and Thr164 together coordinate substrate. Lys166 (proton acceptor) is an active-site residue. Lys168 serves as a coordination point for substrate. Lys192, Asp194, and Glu195 together coordinate Mg(2+). An N6-carboxylysine modification is found at Lys192. His285 functions as the Proton acceptor in the catalytic mechanism. Residues Arg286, His318, and Ser370 each contribute to the substrate site.

Belongs to the RuBisCO large chain family. Type I subfamily. As to quaternary structure, heterohexadecamer of 8 large chains and 8 small chains; disulfide-linked. The disulfide link is formed within the large subunit homodimers. Mg(2+) is required as a cofactor. Post-translationally, the disulfide bond which can form in the large chain dimeric partners within the hexadecamer appears to be associated with oxidative stress and protein turnover.

Its subcellular location is the plastid. The protein localises to the chloroplast. It catalyses the reaction 2 (2R)-3-phosphoglycerate + 2 H(+) = D-ribulose 1,5-bisphosphate + CO2 + H2O. The enzyme catalyses D-ribulose 1,5-bisphosphate + O2 = 2-phosphoglycolate + (2R)-3-phosphoglycerate + 2 H(+). RuBisCO catalyzes two reactions: the carboxylation of D-ribulose 1,5-bisphosphate, the primary event in carbon dioxide fixation, as well as the oxidative fragmentation of the pentose substrate in the photorespiration process. Both reactions occur simultaneously and in competition at the same active site. The polypeptide is Ribulose bisphosphate carboxylase large chain (Adoxa moschatellina (Moschatel)).